The primary structure comprises 318 residues: 1-aminocyclopropane-1-carboxylate oxidase 1 (318 aa).

Residues 153–254 (PTFGTKVSNY…RMSIASFYNP (102 aa)) form the Fe2OG dioxygenase domain. Positions 177, 179, and 234 each coordinate Fe cation.

It belongs to the iron/ascorbate-dependent oxidoreductase family. Fe cation is required as a cofactor. In terms of tissue distribution, fruit.

The catalysed reaction is 1-aminocyclopropane-1-carboxylate + L-ascorbate + O2 = ethene + L-dehydroascorbate + hydrogen cyanide + CO2 + 2 H2O. Its pathway is alkene biosynthesis; ethylene biosynthesis via S-adenosyl-L-methionine; ethylene from S-adenosyl-L-methionine: step 2/2. This chain is 1-aminocyclopropane-1-carboxylate oxidase 1 (ACO1), found in Cucumis melo (Muskmelon).